An 83-amino-acid chain; its full sequence is Protein MATERNALLY EXPRESSED GENE 3 (83 aa).

The first 22 residues, 1 to 22 (MQWLAFVAPRWRCVCDQELSAQ), serve as a signal peptide directing secretion. Cysteines 60 and 82 form a disulfide.

It belongs to the MEG family. Expressed in endosperm, anther and pollen.

The sequence is that of Protein MATERNALLY EXPRESSED GENE 3 (MEG3) from Zea mays (Maize).